The sequence spans 693 residues: Elongation factor G (693 aa).

The tr-type G domain maps to 8–282 (EKTRNIGIMA…AVVDYLPSPL (275 aa)). Residues 17-24 (AHVDAGKT), 81-85 (DTPGH), and 135-138 (NKMD) contribute to the GTP site.

Belongs to the TRAFAC class translation factor GTPase superfamily. Classic translation factor GTPase family. EF-G/EF-2 subfamily.

The protein localises to the cytoplasm. Catalyzes the GTP-dependent ribosomal translocation step during translation elongation. During this step, the ribosome changes from the pre-translocational (PRE) to the post-translocational (POST) state as the newly formed A-site-bound peptidyl-tRNA and P-site-bound deacylated tRNA move to the P and E sites, respectively. Catalyzes the coordinated movement of the two tRNA molecules, the mRNA and conformational changes in the ribosome. In Streptococcus mutans serotype c (strain ATCC 700610 / UA159), this protein is Elongation factor G.